The sequence spans 481 residues: Glutamyl-tRNA(Gln) amidotransferase subunit A (481 aa).

Catalysis depends on charge relay system residues Lys75 and Ser150. The active-site Acyl-ester intermediate is the Ser174.

It belongs to the amidase family. GatA subfamily. In terms of assembly, heterotrimer of A, B and C subunits.

The catalysed reaction is L-glutamyl-tRNA(Gln) + L-glutamine + ATP + H2O = L-glutaminyl-tRNA(Gln) + L-glutamate + ADP + phosphate + H(+). In terms of biological role, allows the formation of correctly charged Gln-tRNA(Gln) through the transamidation of misacylated Glu-tRNA(Gln) in organisms which lack glutaminyl-tRNA synthetase. The reaction takes place in the presence of glutamine and ATP through an activated gamma-phospho-Glu-tRNA(Gln). The chain is Glutamyl-tRNA(Gln) amidotransferase subunit A from Macrococcus caseolyticus (strain JCSC5402) (Macrococcoides caseolyticum).